We begin with the raw amino-acid sequence, 89 residues long: Small ribosomal subunit protein uS15 (89 aa).

This sequence belongs to the universal ribosomal protein uS15 family. Part of the 30S ribosomal subunit. Forms a bridge to the 50S subunit in the 70S ribosome, contacting the 23S rRNA.

In terms of biological role, one of the primary rRNA binding proteins, it binds directly to 16S rRNA where it helps nucleate assembly of the platform of the 30S subunit by binding and bridging several RNA helices of the 16S rRNA. Functionally, forms an intersubunit bridge (bridge B4) with the 23S rRNA of the 50S subunit in the ribosome. The sequence is that of Small ribosomal subunit protein uS15 from Corynebacterium efficiens (strain DSM 44549 / YS-314 / AJ 12310 / JCM 11189 / NBRC 100395).